The following is a 196-amino-acid chain: Large ribosomal subunit protein uL6 (196 aa).

It belongs to the universal ribosomal protein uL6 family. As to quaternary structure, part of the 50S ribosomal subunit.

In terms of biological role, this protein binds to the 23S rRNA, and is important in its secondary structure. It is located near the subunit interface in the base of the L7/L12 stalk, and near the tRNA binding site of the peptidyltransferase center. The protein is Large ribosomal subunit protein uL6 of Archaeoglobus fulgidus (strain ATCC 49558 / DSM 4304 / JCM 9628 / NBRC 100126 / VC-16).